A 431-amino-acid chain; its full sequence is Probable 3-hydroxy-3-methylglutaryl-coenzyme A reductase (431 aa).

Catalysis depends on charge relay system residues Glu85 and Asp278. Catalysis depends on His375, which acts as the Proton donor.

This sequence belongs to the HMG-CoA reductase family.

It catalyses the reaction (R)-mevalonate + 2 NAD(+) + CoA = (3S)-3-hydroxy-3-methylglutaryl-CoA + 2 NADH + 2 H(+). Its pathway is metabolic intermediate metabolism; (R)-mevalonate degradation; (S)-3-hydroxy-3-methylglutaryl-CoA from (R)-mevalonate: step 1/1. Converts HMG-CoA to mevalonate. The chain is Probable 3-hydroxy-3-methylglutaryl-coenzyme A reductase from Borreliella burgdorferi (strain ATCC 35210 / DSM 4680 / CIP 102532 / B31) (Borrelia burgdorferi).